The following is a 251-amino-acid chain: MSEGESKNTHFGYKTVEADKKADLVAGVFHSVAAKYDIMNDVMSFGIHRFWKRYTIEVSGARPGMKVLDLAGGTGDLTAKFSHLVGEKGEVVLADINDSMLKVGRTKLRDRGIVGNVSYVQANAEALPFPDNHFDIITIAFGLRNVTDKDAALRSMNRVLKPGGKLLVLEFSKPQHELMRKVYDLYSFKVLPKMGEIITKDADSYEYLAESIRMHPDQETLKQMMVDAGFEQVDYTNMTDGIVALHRGYKF.

S-adenosyl-L-methionine-binding positions include Thr74, Asp95, and 123 to 124; that span reads NA.

The protein belongs to the class I-like SAM-binding methyltransferase superfamily. MenG/UbiE family.

The enzyme catalyses a 2-demethylmenaquinol + S-adenosyl-L-methionine = a menaquinol + S-adenosyl-L-homocysteine + H(+). It carries out the reaction a 2-methoxy-6-(all-trans-polyprenyl)benzene-1,4-diol + S-adenosyl-L-methionine = a 5-methoxy-2-methyl-3-(all-trans-polyprenyl)benzene-1,4-diol + S-adenosyl-L-homocysteine + H(+). The protein operates within quinol/quinone metabolism; menaquinone biosynthesis; menaquinol from 1,4-dihydroxy-2-naphthoate: step 2/2. It participates in cofactor biosynthesis; ubiquinone biosynthesis. Methyltransferase required for the conversion of demethylmenaquinol (DMKH2) to menaquinol (MKH2) and the conversion of 2-polyprenyl-6-methoxy-1,4-benzoquinol (DDMQH2) to 2-polyprenyl-3-methyl-6-methoxy-1,4-benzoquinol (DMQH2). The polypeptide is Ubiquinone/menaquinone biosynthesis C-methyltransferase UbiE (Shewanella sp. (strain ANA-3)).